We begin with the raw amino-acid sequence, 292 residues long: Probable septum site-determining protein MinC (292 aa).

The tract at residues 109–188 (QVIDTAPPND…PQSSSALVIT (80 aa)) is disordered. Positions 140-150 (QDDEADGEQAD) are enriched in acidic residues. Positions 171–185 (ANRPTATPPQSSSAL) are enriched in polar residues.

The protein belongs to the MinC family. Interacts with MinD and FtsZ.

Cell division inhibitor that blocks the formation of polar Z ring septums. Rapidly oscillates between the poles of the cell to destabilize FtsZ filaments that have formed before they mature into polar Z rings. Prevents FtsZ polymerization. In Bordetella pertussis (strain Tohama I / ATCC BAA-589 / NCTC 13251), this protein is Probable septum site-determining protein MinC.